A 330-amino-acid polypeptide reads, in one-letter code: Free fatty acid receptor 2 (330 aa).

At 1 to 12 (MLPDWKSSLILM) the chain is on the extracellular side. A helical transmembrane segment spans residues 13–33 (AYIIIFLTGLPANLLALRAFV). Residues 34–41 (GRIRQPQP) lie on the Cytoplasmic side of the membrane. A helical membrane pass occupies residues 42–62 (APVHILLLSLTLADLLLLLLL). The Extracellular segment spans residues 63–84 (PFKIIEAASNFRWYLPKVVCAL). The helical transmembrane segment at 85 to 105 (TSFGFYSSIYCSTWLLAGISI) threads the bilayer. Residues 106-126 (ERYLGVAFPVQYKLSRRPLYG) are Cytoplasmic-facing. Residues 127 to 147 (VIAALVAWVMSFGHCTIVIIV) form a helical membrane-spanning segment. The Extracellular portion of the chain corresponds to 148 to 173 (QYLNTTEQVRSGNEITCYENFTDNQL). N-linked (GlcNAc...) asparagine glycans are attached at residues Asn-151 and Asn-167. Residues 174–194 (DVVLPVRLELCLVLFFIPMAV) traverse the membrane as a helical segment. Residues 195–219 (TIFCYWRFVWIMLSQPLVGAQRRRR) lie on the Cytoplasmic side of the membrane. Residues 220-240 (AVGLAVVTLLNFLVCFGPYNV) traverse the membrane as a helical segment. The Extracellular segment spans residues 241–255 (SHLVGYHQRKSPWWR). A helical transmembrane segment spans residues 256–276 (SIAVVFSSLNASLDPLLFYFS). Topologically, residues 277–330 (SSVVRRAFGRGLQVLRNQGSSLLGRRGKDTAEGTNEDRGVGQGEGMPSSDFTTE) are cytoplasmic. The segment at 299-330 (LGRRGKDTAEGTNEDRGVGQGEGMPSSDFTTE) is disordered. The span at 302 to 315 (RGKDTAEGTNEDRG) shows a compositional bias: basic and acidic residues.

The protein belongs to the G-protein coupled receptor 1 family. In terms of assembly, interacts with FCN1 (via Fibrinogen C-terminal domain). As to expression, expressed at relatively high levels in peripheral blood leukocytes and, to lesser extent, in spleen.

The protein resides in the cell membrane. G protein-coupled receptor that is activated by a major product of dietary fiber digestion, the short chain fatty acids (SCFAs), and that plays a role in the regulation of whole-body energy homeostasis and in intestinal immunity. In omnivorous mammals, the short chain fatty acids acetate, propionate and butyrate are produced primarily by the gut microbiome that metabolizes dietary fibers. SCFAs serve as a source of energy but also act as signaling molecules. That G protein-coupled receptor is probably coupled to the pertussis toxin-sensitive, G(i/o)-alpha family of G proteins but also to the Gq family. Its activation results in the formation of inositol 1,4,5-trisphosphate, the mobilization of intracellular calcium, the phosphorylation of the MAPK3/ERK1 and MAPK1/ERK2 kinases and the inhibition of intracellular cAMP accumulation. May play a role in glucose homeostasis by regulating the secretion of GLP-1, in response to short-chain fatty acids accumulating in the intestine. May also regulate the production of LEP/Leptin, a hormone acting on the central nervous system to inhibit food intake. Finally, may also regulate whole-body energy homeostasis through adipogenesis regulating both differentiation and lipid storage of adipocytes. In parallel to its role in energy homeostasis, may also mediate the activation of the inflammatory and immune responses by SCFA in the intestine, regulating the rapid production of chemokines and cytokines. May also play a role in the resolution of the inflammatory response and control chemotaxis in neutrophils. In addition to SCFAs, may also be activated by the extracellular lectin FCN1 in a process leading to activation of monocytes and inducing the secretion of interleukin-8/IL-8 in response to the presence of microbes. Among SCFAs, the fatty acids containing less than 6 carbons, the most potent activators are probably acetate, propionate and butyrate. Exhibits a SCFA-independent constitutive G protein-coupled receptor activity. In Homo sapiens (Human), this protein is Free fatty acid receptor 2 (FFAR2).